The primary structure comprises 844 residues: MDDPAAPGPAGSPANDNGNGNGNGNGNGNGGKGKPAVPKGRETFRNQRRESEGSVDCPTLEFEYGDSDGHAAELSELYSYTENLEFTTNRKCFEEDFRTQVQDTKEWLELEEDAQKTYVMGLLDRLEVVSREKRLKVARAVLYLAQGTFGECDSEVDVLHWSRYNCFLLYQMGTFSAFLELLHMEIDNSQASSSALRKPAVSIADSTELRVLLSVMYLMVENIRLEREIDPCGWRTARETFRTELSFSTHNEEPFALLLFSMVTKFCSGLAPHFPIKKVLLLLWKVVMFTLGGFEHLQALKIQKRAELGLPPLAEDSIQVVKSMRAASPPSYTLDLGESQLAPPPSKLRGRRGSRRQLLTKQDSLDIYNERDLFKTEEPATEEEEESAADGERTLDGELDLLEQDPLVPPPPSQTPLSTDRVAFPKGLPWAPKVRQKDIEHFLEMSRNKFIGFTLGQDTDTLVGLPRPIHESVKTLKQHKYISIADIQIKNEEELEKCPLSLGEEVVPETPSEILYQGMLYSLPQYMIALLKILLAAAPTSKAKTDSINILADVLPEEMPVTVLQSMKLGIDVNRHKEIIVKSISALLLLLLKHFKLNHIYQFEYVSQHLVFANCIPLILKFFNQNILSYITAKNSISVLDYPCCTIQDLPELTTESLEAGDNSQFCWRNLFSCINLLRLLNKLTKWKHSRTMMLVVFKSAPILKRALKVKQAMLQLYVLKLLKIQTKYLGRQWRKSNMKTMSAIYQKVRHRMNDDWAYGNDIDARPWDFQAEECTLRANIEAFNSRRYDKPQDSEFSPVDNCLQSVLGQRLDLPEDFHYSYELWLEREVFSQPICWEELLQNH.

Low complexity predominate over residues 1–18; that stretch reads MDDPAAPGPAGSPANDNG. The interval 1-58 is disordered; that stretch reads MDDPAAPGPAGSPANDNGNGNGNGNGNGNGGKGKPAVPKGRETFRNQRRESEGSVDCP. Residues 19-33 are compositionally biased toward gly residues; sequence NGNGNGNGNGNGGKG. Over residues 39-52 the composition is skewed to basic and acidic residues; the sequence is KGRETFRNQRRESE. A phosphoserine mark is found at S328, S339, and S364. Residues 331-355 form a disordered region; the sequence is SYTLDLGESQLAPPPSKLRGRRGSR. The disordered stretch occupies residues 370–422; sequence ERDLFKTEEPATEEEEESAADGERTLDGELDLLEQDPLVPPPPSQTPLSTDRV. The span at 379–389 shows a compositional bias: acidic residues; it reads PATEEEEESAA.

It belongs to the STRIP family. Part of the core of STRIPAK complexes composed of PP2A catalytic and scaffolding subunits, the striatins (PP2A regulatory subunits), the striatin-associated proteins MOB4, STRIP1 and STRIP2, PDCD10 and members of the STE20 kinases, such as STK24 and STK26. Interacts with CTTNBP2NL.

The protein resides in the cytoplasm. Plays a role in the regulation of cell morphology and cytoskeletal organization. Required in the control of cell shape. Calmodulin-binding scaffolding protein which is the center of the striatin-interacting phosphatase and kinase (STRIPAK) complexes. STRIPAK complexes have critical roles in protein (de)phosphorylation and are regulators of multiple signaling pathways including Hippo, MAPK, nuclear receptor and cytoskeleton remodeling. Different types of STRIPAK complexes are involved in a variety of biological processes such as cell growth, differentiation, apoptosis, metabolism and immune regulation. In Mus musculus (Mouse), this protein is Striatin-interacting proteins 2 (Strip2).